A 352-amino-acid chain; its full sequence is Probable protein phosphatase 2C 56 (352 aa).

2 disordered regions span residues 18 to 37 and 53 to 87; these read RGRR…ASRG and SSSS…ITGG. Low complexity-rich tracts occupy residues 23 to 37 and 53 to 75; these read AASP…ASRG and SSSS…ARTR. A PPM-type phosphatase domain is found at 96–343; that stretch reads SWDYSSFKGR…DNITCIVLQF (248 aa). Mn(2+)-binding residues include Asp132, Gly133, Asp295, and Asp334.

It belongs to the PP2C family. Mg(2+) serves as cofactor. Mn(2+) is required as a cofactor.

It catalyses the reaction O-phospho-L-seryl-[protein] + H2O = L-seryl-[protein] + phosphate. The catalysed reaction is O-phospho-L-threonyl-[protein] + H2O = L-threonyl-[protein] + phosphate. The sequence is that of Probable protein phosphatase 2C 56 from Oryza sativa subsp. japonica (Rice).